The sequence spans 428 residues: Glutamate-1-semialdehyde 2,1-aminomutase 1 (428 aa).

Lys-268 is subject to N6-(pyridoxal phosphate)lysine.

The protein belongs to the class-III pyridoxal-phosphate-dependent aminotransferase family. HemL subfamily. In terms of assembly, homodimer. Requires pyridoxal 5'-phosphate as cofactor.

It localises to the cytoplasm. The enzyme catalyses (S)-4-amino-5-oxopentanoate = 5-aminolevulinate. The protein operates within porphyrin-containing compound metabolism; protoporphyrin-IX biosynthesis; 5-aminolevulinate from L-glutamyl-tRNA(Glu): step 2/2. This chain is Glutamate-1-semialdehyde 2,1-aminomutase 1, found in Geobacillus thermodenitrificans (strain NG80-2).